The following is a 474-amino-acid chain: tRNA-2-methylthio-N(6)-dimethylallyladenosine synthase (474 aa).

One can recognise an MTTase N-terminal domain in the interval 3–120 (QKLHIKTWGC…LPEMINQIRG (118 aa)). Residues Cys-12, Cys-49, Cys-83, Cys-157, Cys-161, and Cys-164 each contribute to the [4Fe-4S] cluster site. The Radical SAM core domain maps to 143–375 (RAEGPTAFVS…QQRINNQAAQ (233 aa)). The TRAM domain occupies 378–441 (RAMLGTEQRV…TNSLRGEVVR (64 aa)).

Belongs to the methylthiotransferase family. MiaB subfamily. In terms of assembly, monomer. Requires [4Fe-4S] cluster as cofactor.

It is found in the cytoplasm. It catalyses the reaction N(6)-dimethylallyladenosine(37) in tRNA + (sulfur carrier)-SH + AH2 + 2 S-adenosyl-L-methionine = 2-methylsulfanyl-N(6)-dimethylallyladenosine(37) in tRNA + (sulfur carrier)-H + 5'-deoxyadenosine + L-methionine + A + S-adenosyl-L-homocysteine + 2 H(+). Functionally, catalyzes the methylthiolation of N6-(dimethylallyl)adenosine (i(6)A), leading to the formation of 2-methylthio-N6-(dimethylallyl)adenosine (ms(2)i(6)A) at position 37 in tRNAs that read codons beginning with uridine. In Histophilus somni (strain 129Pt) (Haemophilus somnus), this protein is tRNA-2-methylthio-N(6)-dimethylallyladenosine synthase.